Reading from the N-terminus, the 219-residue chain is U-scoloptoxin(11)-Sm7a (219 aa).

The N-terminal stretch at 1–15 (MYLFLMINYFVLANS) is a signal peptide.

Belongs to the scoloptoxin-11 family. Post-translationally, contains 8 disulfide bonds. As to expression, expressed by the venom gland.

It is found in the secreted. The sequence is that of U-scoloptoxin(11)-Sm7a from Scolopendra morsitans (Tanzanian blue ringleg centipede).